We begin with the raw amino-acid sequence, 100 residues long: Urease subunit gamma (100 aa).

It belongs to the urease gamma subunit family. As to quaternary structure, heterotrimer of UreA (gamma), UreB (beta) and UreC (alpha) subunits. Three heterotrimers associate to form the active enzyme.

Its subcellular location is the cytoplasm. It carries out the reaction urea + 2 H2O + H(+) = hydrogencarbonate + 2 NH4(+). Its pathway is nitrogen metabolism; urea degradation; CO(2) and NH(3) from urea (urease route): step 1/1. The protein is Urease subunit gamma of Alcanivorax borkumensis (strain ATCC 700651 / DSM 11573 / NCIMB 13689 / SK2).